The following is a 397-amino-acid chain: Arginine biosynthesis bifunctional protein ArgJ (397 aa).

6 residues coordinate substrate: Thr147, Lys173, Thr184, Glu270, Asn392, and Thr397. Thr184 serves as the catalytic Nucleophile.

The protein belongs to the ArgJ family. In terms of assembly, heterotetramer of two alpha and two beta chains.

Its subcellular location is the cytoplasm. The catalysed reaction is N(2)-acetyl-L-ornithine + L-glutamate = N-acetyl-L-glutamate + L-ornithine. It catalyses the reaction L-glutamate + acetyl-CoA = N-acetyl-L-glutamate + CoA + H(+). It participates in amino-acid biosynthesis; L-arginine biosynthesis; L-ornithine and N-acetyl-L-glutamate from L-glutamate and N(2)-acetyl-L-ornithine (cyclic): step 1/1. It functions in the pathway amino-acid biosynthesis; L-arginine biosynthesis; N(2)-acetyl-L-ornithine from L-glutamate: step 1/4. Its function is as follows. Catalyzes two activities which are involved in the cyclic version of arginine biosynthesis: the synthesis of N-acetylglutamate from glutamate and acetyl-CoA as the acetyl donor, and of ornithine by transacetylation between N(2)-acetylornithine and glutamate. This Streptococcus thermophilus (strain CNRZ 1066) protein is Arginine biosynthesis bifunctional protein ArgJ.